The sequence spans 29 residues: Cyclotide mra2 (29 aa).

Disulfide bonds link Cys4/Cys19, Cys8/Cys21, and Cys13/Cys26.

In terms of processing, this is a cyclic peptide. Post-translationally, contains 3 disulfide bonds.

Probably participates in a plant defense mechanism. This Melicytus ramiflorus (Whitey wood) protein is Cyclotide mra2.